The chain runs to 333 residues: Probable tRNA pseudouridine synthase B (333 aa).

Catalysis depends on Asp-66, which acts as the Nucleophile. The 76-residue stretch at 233–308 (LKKIIVKDSA…EVVEITRVIM (76 aa)) folds into the PUA domain.

The protein belongs to the pseudouridine synthase TruB family. Type 2 subfamily.

It carries out the reaction uridine(55) in tRNA = pseudouridine(55) in tRNA. Its function is as follows. Could be responsible for synthesis of pseudouridine from uracil-55 in the psi GC loop of transfer RNAs. This is Probable tRNA pseudouridine synthase B from Methanococcus maripaludis (strain C7 / ATCC BAA-1331).